Reading from the N-terminus, the 1531-residue chain is Probable outer membrane protein PmpD (1531 aa).

The N-terminal stretch at 1-20 (MSSEKDIKSTCSKFSLSVVA) is a signal peptide. Residues 1244–1531 (EFDYSTNVWG…EANTGLRLIF (288 aa)) enclose the Autotransporter domain.

This sequence belongs to the PMP outer membrane protein family.

Its subcellular location is the secreted. The protein resides in the cell wall. It is found in the cell outer membrane. The sequence is that of Probable outer membrane protein PmpD (pmpD) from Chlamydia trachomatis serovar D (strain ATCC VR-885 / DSM 19411 / UW-3/Cx).